A 167-amino-acid chain; its full sequence is Translation initiation factor IF-3 (167 aa).

It belongs to the IF-3 family. In terms of assembly, monomer.

The protein resides in the cytoplasm. IF-3 binds to the 30S ribosomal subunit and shifts the equilibrium between 70S ribosomes and their 50S and 30S subunits in favor of the free subunits, thus enhancing the availability of 30S subunits on which protein synthesis initiation begins. This is Translation initiation factor IF-3 from Bacillus cereus (strain ATCC 14579 / DSM 31 / CCUG 7414 / JCM 2152 / NBRC 15305 / NCIMB 9373 / NCTC 2599 / NRRL B-3711).